A 1121-amino-acid chain; its full sequence is MTAAAASNWGLITNIVNSIVGVSVLTMPFCFKQCGIVLGALLLVFCSWMTHQSCMFLVKSASLSKRRTYAGLAFHAYGKAGKMLVETSMIGLMLGTCIAFYVVIGDLGSNFFARLFGFQVGGTFRMFLLFAVSLCIVLPLSLQRNMMASIQSFSAMALLFYTVFMFVIVLSSLKHGLFSGQWLRRVSYVRWEGVFRCIPIFGMSFACQSQVLPTYDSLDEPSVKTMSSIFASSLNVVTTFYVMVGFFGYVSFTEATAGNVLMHFPSNLVTEMLRVGFMMSVAVGFPMMILPCRQALSTLLCEQQQKDGTFAAGGYMPPLRFKALTLSVVFGTMVGGILIPNVETILGLTGATMGSLICFICPALIYKKIHKNALSSQVVLWVGLGILVVSTVTTLSVSEDVPEDLAEEAPGGRLGEAEGLMKVEAARLSAQDPVVAVAEDGREKPKLPKEREELEQAQIKGPVDVPGREDGKEAQEEAQLDRPGQGIAVPVGEAHRHEPPVPHDKVVVDEGQDQEVPEENKPPSRHAGRKAPGVQGQMAPPLPDSEREKREPEQGEVGKRPGQAQALEEAGDLPEDPQKVPEADGQPAVQPAKEDLEPGDGGLHPRPQAVLSEQQNGLAVDEGEKAEGVPPPGNAAGDTGQPAEDSDHGGKPPLPEEKPAPGAGLPPEPREQRDVERAGGDQAASQLEEAGRAEMLDHAVLLQVIKEQQVQQKRLLDQQEKLLAVIEEQHKEIHQQRQEDEEDKPRQVEVHPEPGAAVPRGQEAPEGKARETMENLPPLPLDPVLRAPGGRPAPSQDLNQRSLEHPERPVGRDPAGPPDGGPDTEPRAAQAKPRDGQKDAAPGAAGTVKELLKGLEQVPVPDPAREAGGPEERLAEEFPGQSQDVTGGGSQDRKKPGKEVAATGTGILKEANWLVAGPGAEMGDPHMKPKQMSRDLGLAVDLPGGAEGAAAQPQAVLRQPELRVISDGEQGGQQGHRLDHGGYLEMRKEARGGDHMPVSHEQLGGEEDAAVPEPRQRPEPELGLKQAVPGGQRPDNAKPNRDLKLQAGSDLRRRRRDLGPHAEGELAPRDRVIIGLNPLPDVQVNDLRGALDAQLRQAAGGALQVVHSRQLRQAPGAPEES.

The next 10 helical transmembrane spans lie at 4–24 (AAASNWGLITNIVNSIVGVSV), 36–58 (IVLGALLLVFCSWMTHQSCMFLV), 84–104 (LVETSMIGLMLGTCIAFYVVI), 120–140 (VGGTFRMFLLFAVSLCIVLPL), 153–173 (FSAMALLFYTVFMFVIVLSSL), 229–249 (IFASSLNVVTTFYVMVGFFGY), 272–292 (MLRVGFMMSVAVGFPMMILPC), 323–343 (ALTLSVVFGTMVGGILIPNVE), 345–365 (ILGLTGATMGSLICFICPALI), and 378–398 (VVLWVGLGILVVSTVTTLSVS). 3 disordered regions span residues 434–691 (VVAV…EEAG), 731–904 (KEIH…AATG), and 965–1068 (ISDG…ELAP). Basic and acidic residues-rich tracts occupy residues 439–454 (EDGREKPKLPKEREEL), 466–475 (PGREDGKEAQ), 493–508 (EAHRHEPPVPHDKVVV), and 544–559 (DSEREKREPEQGEVGK). Residue S612 is modified to Phosphoserine. 6 stretches are compositionally biased toward basic and acidic residues: residues 645-659 (DSDHGGKPPLPEEKP), 668-679 (EPREQRDVERAG), 731-752 (KEIHQQRQEDEEDKPRQVEVHP), 763-773 (EAPEGKARETM), 802-811 (SLEHPERPVG), and 863-876 (PAREAGGPEERLAE). A Phosphothreonine modification is found at T772. The residue at position 802 (S802) is a Phosphoserine. Phosphoserine is present on residues S890 and S966. A compositionally biased stretch (basic and acidic residues) spans 976 to 998 (HRLDHGGYLEMRKEARGGDHMPV). A Phosphoserine modification is found at S999. Composition is skewed to basic and acidic residues over residues 1035–1044 (DNAKPNRDLK) and 1057–1068 (DLGPHAEGELAP).

This sequence belongs to the amino acid/polyamine transporter 2 family.

Its subcellular location is the membrane. The enzyme catalyses L-glutamate(out) = L-glutamate(in). It carries out the reaction L-glutamine(out) = L-glutamine(in). It catalyses the reaction L-alanine(in) = L-alanine(out). The catalysed reaction is L-serine(in) = L-serine(out). The enzyme catalyses L-leucine(in) = L-leucine(out). Functionally, facilitates bidirectional transport of amino acids. May act as a glutamate sensor that regulates glutamate-glutamine cycle and mTOR signaling in the brain. The transport mechanism remains to be elucidated. The chain is Solute carrier family 38 member 10 from Pongo abelii (Sumatran orangutan).